Consider the following 240-residue polypeptide: Large ribosomal subunit protein uL2 (240 aa).

The span at 1–12 (MGRRIQGQRRGR) shows a compositional bias: basic residues. Disordered stretches follow at residues 1–21 (MGRR…RAPS) and 198–240 (VDHP…GSNK). Over residues 221 to 231 (PPGRKVGDIAS) the composition is skewed to basic and acidic residues.

It belongs to the universal ribosomal protein uL2 family. Part of the 50S ribosomal subunit. Forms a bridge to the 30S subunit in the 70S ribosome.

Functionally, one of the primary rRNA binding proteins. Required for association of the 30S and 50S subunits to form the 70S ribosome, for tRNA binding and peptide bond formation. It has been suggested to have peptidyltransferase activity; this is somewhat controversial. Makes several contacts with the 16S rRNA in the 70S ribosome. The protein is Large ribosomal subunit protein uL2 of Halorubrum lacusprofundi (strain ATCC 49239 / DSM 5036 / JCM 8891 / ACAM 34).